A 198-amino-acid polypeptide reads, in one-letter code: Elongation factor Ts (198 aa).

The interval 81–84 is involved in Mg(2+) ion dislocation from EF-Tu; that stretch reads TDFV.

This sequence belongs to the EF-Ts family.

The protein resides in the cytoplasm. Its function is as follows. Associates with the EF-Tu.GDP complex and induces the exchange of GDP to GTP. It remains bound to the aminoacyl-tRNA.EF-Tu.GTP complex up to the GTP hydrolysis stage on the ribosome. The polypeptide is Elongation factor Ts (Dictyoglomus turgidum (strain DSM 6724 / Z-1310)).